The following is a 265-amino-acid chain: Transcriptional activator TAF-1 (265 aa).

Disordered regions lie at residues 1 to 133 and 167 to 218; these read AHGG…SEKA and THLK…KQAE. The segment covering 35 to 46 has biased composition (low complexity); sequence ASLSLDASAKSS. Basic and acidic residues-rich tracts occupy residues 103-115 and 191-209; these read RETTPDNSGDSKS and NERELKREKRKQSNRESAR. The 64-residue stretch at 194–257 folds into the bZIP domain; it reads ELKREKRKQS…EKLKLENAAL (64 aa). Residues 196-215 form a basic motif region; that stretch reads KREKRKQSNRESARRSRLRK. The leucine-zipper stretch occupies residues 222–257; it reads LAIRVQSLTAENMTLKSEINKLMENSEKLKLENAAL.

Belongs to the bZIP family. As to expression, present mainly in roots. Barely detectable in stems and leaves.

Its subcellular location is the nucleus. Functionally, trans-activator of a beta-glucuronidase (GUS) reporter gene. Binds to a G-box-related element, (5'-GCAACGTGGC-3'). Also binds to the HEX-motif of wheat histone H3 promoter. The protein is Transcriptional activator TAF-1 (TAF1) of Nicotiana tabacum (Common tobacco).